The sequence spans 312 residues: Small ribosomal subunit biogenesis GTPase RsgA (312 aa).

The CP-type G domain maps to 86–245 (QSFLKRPAVA…LADTPGFNRP (160 aa)). Residues 135-138 (TKID) and 187-195 (GPSGVGKTS) each bind GTP. Residues Cys-270, Cys-275, His-277, and Cys-283 each coordinate Zn(2+).

It belongs to the TRAFAC class YlqF/YawG GTPase family. RsgA subfamily. In terms of assembly, monomer. Associates with 30S ribosomal subunit, binds 16S rRNA. Zn(2+) is required as a cofactor.

The protein resides in the cytoplasm. Its function is as follows. One of several proteins that assist in the late maturation steps of the functional core of the 30S ribosomal subunit. Helps release RbfA from mature subunits. May play a role in the assembly of ribosomal proteins into the subunit. Circularly permuted GTPase that catalyzes slow GTP hydrolysis, GTPase activity is stimulated by the 30S ribosomal subunit. In Prochlorococcus marinus (strain NATL1A), this protein is Small ribosomal subunit biogenesis GTPase RsgA.